The chain runs to 309 residues: F-box/LRR-repeat protein At3g48880 (309 aa).

Residues 10 to 57 (LRRWEELDTDILVRIFQKFSVFELTSGLAHVCRGWRAACCDPILWKTV) enclose the F-box domain. LRR repeat units follow at residues 77–107 (VERRSDEALTRILKLSMNLSGGSTRTLIFHF), 108–133 (NLFLSDDQLTYTAERCPGLRRVVLPA), 159–184 (SIANPPYLLTEIAKNCKNFKELKIMG), and 208–233 (CSAIKREALMKILDGLPSLEVLNISH).

This chain is F-box/LRR-repeat protein At3g48880, found in Arabidopsis thaliana (Mouse-ear cress).